Consider the following 206-residue polypeptide: Cytochrome c oxidase subunit 3 (206 aa).

A run of 5 helical transmembrane segments spans residues Phe26 to Thr46, Leu68 to Phe88, Ala97 to Ile117, Leu143 to Ile163, and Trp185 to Gly205.

It belongs to the cytochrome c oxidase subunit 3 family.

Its subcellular location is the cell membrane. It carries out the reaction 4 Fe(II)-[cytochrome c] + O2 + 8 H(+)(in) = 4 Fe(III)-[cytochrome c] + 2 H2O + 4 H(+)(out). The protein is Cytochrome c oxidase subunit 3 (ctaE) of Alkalihalophilus pseudofirmus (strain ATCC BAA-2126 / JCM 17055 / OF4) (Bacillus pseudofirmus).